Here is a 191-residue protein sequence, read N- to C-terminus: Putative endogenous retrovirus group K member 11-1 Env polyprotein (191 aa).

Residues 1–191 form a truncated surface protein region; it reads MPGAIDDHCP…DITLHPQGLV (191 aa).

The protein belongs to the beta type-B retroviral envelope protein family. HERV class-II K(HML-8) env subfamily. As to expression, cerebellum and testis.

It is found in the virion. Retroviral envelope proteins mediate receptor recognition and membrane fusion during early infection. Endogenous envelope proteins may have kept, lost or modified their original function during evolution. In Homo sapiens (Human), this protein is Putative endogenous retrovirus group K member 11-1 Env polyprotein (ERVK11-1).